The sequence spans 818 residues: Dipeptidyl aminopeptidase B (818 aa).

Residues Met-1–Arg-29 are Cytoplasmic-facing. Residues Val-30 to Leu-45 form a helical; Signal-anchor for type II membrane protein membrane-spanning segment. The Lumenal portion of the chain corresponds to Lys-46–Lys-818. Asn-63, Asn-79, Asn-110, Asn-139, Asn-372, Asn-392, and Asn-421 each carry an N-linked (GlcNAc...) asparagine glycan. Residue Ser-679 is the Charge relay system of the active site. A glycan (N-linked (GlcNAc...) asparagine) is linked at Asn-738. Residues Asp-756 and His-789 each act as charge relay system in the active site.

Belongs to the peptidase S9B family.

It localises to the vacuole membrane. In Saccharomyces cerevisiae (strain ATCC 204508 / S288c) (Baker's yeast), this protein is Dipeptidyl aminopeptidase B (DAP2).